A 377-amino-acid polypeptide reads, in one-letter code: GTP 3',8-cyclase (377 aa).

The interval methionine 1–histidine 29 is disordered. Residues arginine 45–arginine 271 form the Radical SAM core domain. Arginine 54 is a binding site for GTP. [4Fe-4S] cluster-binding residues include cysteine 61 and cysteine 65. An S-adenosyl-L-methionine-binding site is contributed by tyrosine 67. Cysteine 68 is a [4Fe-4S] cluster binding site. Arginine 105 lines the GTP pocket. Residue glycine 109 participates in S-adenosyl-L-methionine binding. Threonine 140 contacts GTP. Position 164 (serine 164) interacts with S-adenosyl-L-methionine. Lysine 201 provides a ligand contact to GTP. Residue methionine 235 coordinates S-adenosyl-L-methionine. Positions 304 and 307 each coordinate [4Fe-4S] cluster. Arginine 309–arginine 311 is a binding site for GTP. Cysteine 321 provides a ligand contact to [4Fe-4S] cluster.

It belongs to the radical SAM superfamily. MoaA family. As to quaternary structure, monomer and homodimer. The cofactor is [4Fe-4S] cluster.

The enzyme catalyses GTP + AH2 + S-adenosyl-L-methionine = (8S)-3',8-cyclo-7,8-dihydroguanosine 5'-triphosphate + 5'-deoxyadenosine + L-methionine + A + H(+). It participates in cofactor biosynthesis; molybdopterin biosynthesis. Functionally, catalyzes the cyclization of GTP to (8S)-3',8-cyclo-7,8-dihydroguanosine 5'-triphosphate. This Corynebacterium glutamicum (strain ATCC 13032 / DSM 20300 / JCM 1318 / BCRC 11384 / CCUG 27702 / LMG 3730 / NBRC 12168 / NCIMB 10025 / NRRL B-2784 / 534) protein is GTP 3',8-cyclase.